We begin with the raw amino-acid sequence, 142 residues long: Hemoglobin subunit alpha-A (142 aa).

The region spanning 2–142 is the Globin domain; that stretch reads VLSAADKTNV…VGAVLTAKYR (141 aa). Residue His59 coordinates O2. His88 contributes to the heme b binding site.

It belongs to the globin family. As to quaternary structure, heterotetramer of two alpha chains and two beta chains. In terms of tissue distribution, red blood cells.

In terms of biological role, involved in oxygen transport from the lung to the various peripheral tissues. This is Hemoglobin subunit alpha-A (HBAA) from Anas platyrhynchos platyrhynchos (Northern mallard).